A 526-amino-acid polypeptide reads, in one-letter code: Reticulocyte-binding protein homolog 5 (526 aa).

Residues 1 to 24 form the signal peptide; that stretch reads MIRIKKKLILTIIYIHLFILNRLS. A mediates interaction with human BSG region spans residues 33–51; it reads KNQENNLTLLPIKSTEEEK. Residues Asn38 and Asn214 are each glycosylated (N-linked (GlcNAc...) asparagine). 2 disulfides stabilise this stretch: Cys224/Cys317 and Cys345/Cys351. The segment covering 259–279 has biased composition (acidic residues); it reads EIDDKSEETDDETEEVEDSIQ. Residues 259–294 are disordered; it reads EIDDKSEETDDETEEVEDSIQDTDSNHTPSNKKKND. N-linked (GlcNAc...) asparagine glycosylation is present at Asn297.

In terms of assembly, forms a complex composed of RH5, P113 and human BSG/basigin; the complex bridges the merozoite and host erythrocyte membranes. Within the complex, interacts (via C-terminus) with human BSG/basigin isoform 2 (via the extracellular domain); the interaction is independent of BSG glycosylation status. Weakly interacts with P.troglodytes BSG but not with G.gorilla BSG. Also, interacts (via N-terminus) with P113; the interaction tethers RH5 to the merozoite membrane. Component of the PfRH5 adhesion complex composed of 1 copy of CyRPA, RH5 and RIPR; the complex is formed during merozoite invasion of host erythrocytes specifically at the interface between the parasite and host membranes. Within the complex, interacts with CyRPA. CyRPA recruits RIPR to the RH5-P113-BSG complex; the formation of the PfRH5 adhesion complex increases the affinity of RH5 for BSG and probably leads to the release of RH5 from P113 while maintaining the interaction of the PfRH5 adhesion complex with BSG. Post-translationally, cleaved into a 45kDa form during merozoite invasion of host erythrocyte.

It is found in the secreted. The protein localises to the cytoplasmic vesicle. It localises to the secretory vesicle. The protein resides in the rhoptry lumen. Its subcellular location is the host cell membrane. Essential for the invasion of host erythrocytes by blood stage merozoites. By binding P113 at the surface of the merozoite and human BSG/basigin on the erythrocyte membrane, leads to the establishment of a tight junction between the merozoite and host erythrocyte membranes. In addition, the interaction with BSG results in BSG dimerization which triggers an increase in intracellular Ca(2+) in the erythrocyte. This essential step leads to a rearrangement of the erythrocyte cytoskeleton required for the merozoite invasion. The protein is Reticulocyte-binding protein homolog 5 of Plasmodium falciparum (isolate 3D7).